The sequence spans 330 residues: Putative acetyltransferase ORF330 (330 aa).

Transmembrane regions (helical) follow at residues 29-49 (GFAS…LPLS), 50-70 (IFRP…FLLL), 90-110 (IYPL…YYFH), 118-138 (LFLH…SYVF), 163-183 (FLLA…IVTL), 190-210 (LLYF…IAYI), 225-245 (ISFL…NEFL), 252-272 (VVVY…PPKV), 273-293 (LSKV…WHLL), and 297-317 (LLGV…EFPL).

The protein localises to the host membrane. This chain is Putative acetyltransferase ORF330, found in Acidianus convivator (ATV).